The sequence spans 1382 residues: Ninein-like protein (1382 aa).

EF-hand domains lie at His7 to Glu42 and Leu41 to Ser76. Positions Ala144–Ala164 are disordered. Ser148 carries the phosphoserine modification. Residues Glu150–Ala164 are compositionally biased toward basic and acidic residues. 2 consecutive EF-hand domains span residues Thr196 to Gln231 and Leu233 to Ala268. Residues Asp246, Asp248, Asp250, Lys252, and Glu257 each contribute to the Ca(2+) site. Coiled-coil stretches lie at residues Gln384–Cys424, Ala484–Leu579, and Ile616–Asp699. The KEN box signature appears at Lys495–Asn497. The D-box signature appears at Arg633–Asn641. Disordered stretches follow at residues Pro857–Arg969 and Arg982–Glu1006. The segment covering Gln991–Ala1004 has biased composition (low complexity). A coiled-coil region spans residues Glu1046–Ile1375.

Interacts with gamma-tubulin and TUBGCP4. Interacts with anaphase promoting complex/cyclosome (APC/C). Interacts with CDC20 and FZR1. Isoform 2 interacts with LCA5 and USH2A. Isoform 2 interacts with DZANK1. Phosphorylated by PLK1 which disrupts its centrosome association and interaction with gamma-tubulin. Post-translationally, ubiquitinated by the APC/C complex leading to its degradation. As to expression, expressed in KYSE-150 esophageal carcinoma, HeLa cervical carcinoma and U2OS osteosarcoma cells. Expression is regulated in a cell cycle-dependent manner and peaks during G2/M phase (at protein level). Expressed in fetal heart, skeletal muscle, liver, lung and cochlea, and in adult brain, testis, kidney and retina.

Its subcellular location is the cytoplasm. The protein localises to the cytoskeleton. The protein resides in the microtubule organizing center. It localises to the centrosome. Its function is as follows. Involved in the microtubule organization in interphase cells. Overexpression induces the fragmentation of the Golgi, and causes lysosomes to disperse toward the cell periphery; it also interferes with mitotic spindle assembly. Involved in vesicle transport in photoreceptor cells. May play a role in ovarian carcinogenesis. The polypeptide is Ninein-like protein (NINL) (Homo sapiens (Human)).